A 507-amino-acid polypeptide reads, in one-letter code: ATP synthase subunit alpha (507 aa).

ATP is bound at residue 168–175; it reads GDRKTGKT.

This sequence belongs to the ATPase alpha/beta chains family. In terms of assembly, F-type ATPases have 2 components, CF(1) - the catalytic core - and CF(0) - the membrane proton channel. CF(1) has five subunits: alpha(3), beta(3), gamma(1), delta(1), epsilon(1). CF(0) has three main subunits: a(1), b(2) and c(9-12). The alpha and beta chains form an alternating ring which encloses part of the gamma chain. CF(1) is attached to CF(0) by a central stalk formed by the gamma and epsilon chains, while a peripheral stalk is formed by the delta and b chains.

The protein localises to the cell inner membrane. It catalyses the reaction ATP + H2O + 4 H(+)(in) = ADP + phosphate + 5 H(+)(out). In terms of biological role, produces ATP from ADP in the presence of a proton gradient across the membrane. The alpha chain is a regulatory subunit. In Ehrlichia ruminantium (strain Gardel), this protein is ATP synthase subunit alpha.